The sequence spans 839 residues: Autophagy-related protein 9A (839 aa).

The interval 1 to 20 (MAQFDTEYQRLEASYSDSPP) is disordered. Residue Ala2 is modified to N-acetylalanine. Over 2-61 (AQFDTEYQRLEASYSDSPPGEEDLLVHVAEGSKSPWHHIENLDLFFSRVYNLHQKNGFTC) the chain is Cytoplasmic. The short motif at 8–11 (YQRL) is the Tyrosine-based sorting signal element. A phosphoserine mark is found at Ser14, Ser16, and Ser18. A helical membrane pass occupies residues 62–84 (MLIGEIFELMQFLFVVAFTTFLV). The Lumenal portion of the chain corresponds to 85–128 (SCVDYDILFANKMVNHSLHPTEPVKVTLPDAFLPAQVCSARIQE). The N-linked (GlcNAc...) asparagine glycan is linked to Asn99. The helical transmembrane segment at 129–154 (NGSLITILVIAGVFWIHRLIKFIYNI) threads the bilayer. Residues 155–290 (CCYWEIHSFY…ELAQRLSNRI (136 aa)) lie on the Cytoplasmic side of the membrane. An intramembrane segment occupies 291-301 (LWIGIANFLLC). The Cytoplasmic portion of the chain corresponds to 302–319 (PLILIWQILYAFFSYAEV). Residues 320 to 328 (LKREPGALG) lie within the membrane without spanning it. Residues 329–371 (ARCWSLYGRCYLRHFNELEHELQSRLNRGYKPASKYMNCFLSP) lie on the Cytoplasmic side of the membrane. A helical transmembrane segment spans residues 372-397 (LLTLLAKNGAFFAGSILAVLIALTIY). Residues 398–406 (DEDVLAVEH) are Lumenal-facing. A helical membrane pass occupies residues 407–424 (VLTTVTLLGVTVTVCRSF). At 425–470 (IPDQHMVFCPEQLLRVILAHIHYMPDHWQGNAHRSQTRDEFAQLFQ) the chain is on the cytoplasmic side. An intramembrane segment occupies 471-480 (YKAVFILEEL). Over 481 to 483 (LSP) the chain is Cytoplasmic. The stretch at 484 to 492 (IVTPLILIF) is an intramembrane region. Residues 493-839 (CLRPRALEII…DELPPQVHKV (347 aa)) lie on the Cytoplasmic side of the membrane. Phosphoserine is present on residues Ser656, Ser735, Ser738, Ser741, and Ser828. Disordered stretches follow at residues 656-686 (SPLQPGQAPTGRAHSTMTGSGVDARTASSGS) and 719-839 (QQAQ…VHKV). Over residues 724 to 736 (EPERHLWHRRESD) the composition is skewed to basic and acidic residues. Composition is skewed to acidic residues over residues 737–747 (ESGESAPDEGG) and 823–832 (VPEEGSEDEL).

This sequence belongs to the ATG9 family. As to quaternary structure, homotrimer; forms a homotrimer with a central pore that forms a path between the two membrane leaflets. Interacts (via cytoplasmic its C-terminus) with ATG2A. Interacts with SUPT20H. Interacts (via the tyrosine-based sorting signal motif) with AP4M1; promoting association with the AP-4 complex. Interacts with ARFIP1 and ARFIP2. Interacts with PI4K2A and PI4KB. Interacts with ATG4A; the interaction is direct and promotes ATG9A trafficking. Post-translationally, ufmylated in a DDRGK1 dependent manner.

The protein resides in the preautophagosomal structure membrane. Its subcellular location is the cytoplasmic vesicle. It is found in the autophagosome membrane. It localises to the golgi apparatus. The protein localises to the trans-Golgi network membrane. The protein resides in the late endosome membrane. Its subcellular location is the recycling endosome membrane. It is found in the endoplasmic reticulum membrane. It localises to the mitochondrion membrane. It catalyses the reaction a 1,2-diacyl-sn-glycero-3-phosphocholine(in) = a 1,2-diacyl-sn-glycero-3-phosphocholine(out). The enzyme catalyses a 1,2-diacyl-sn-glycero-3-phospho-L-serine(in) = a 1,2-diacyl-sn-glycero-3-phospho-L-serine(out). It carries out the reaction a 1,2-diacyl-sn-glycero-3-phosphoethanolamine(in) = a 1,2-diacyl-sn-glycero-3-phosphoethanolamine(out). Its function is as follows. Phospholipid scramblase involved in autophagy by mediating autophagosomal membrane expansion. Cycles between the preautophagosomal structure/phagophore assembly site (PAS) and the cytoplasmic vesicle pool and supplies membrane for the growing autophagosome. Lipid scramblase activity plays a key role in preautophagosomal structure/phagophore assembly by distributing the phospholipids that arrive through ATG2 (ATG2A or ATG2B) from the cytoplasmic to the luminal leaflet of the bilayer, thereby driving autophagosomal membrane expansion. Also required to supply phosphatidylinositol 4-phosphate to the autophagosome initiation site by recruiting the phosphatidylinositol 4-kinase beta (PI4KB) in a process dependent on ARFIP2, but not ARFIP1. In addition to autophagy, also plays a role in necrotic cell death. This chain is Autophagy-related protein 9A, found in Pongo abelii (Sumatran orangutan).